A 194-amino-acid polypeptide reads, in one-letter code: UPF0232 protein MSMEG_0004/MSMEI_0006 (194 aa).

The span at M1–A14 shows a compositional bias: acidic residues. Residues M1–Q81 are disordered. A compositionally biased stretch (basic and acidic residues) spans D30–R52.

It belongs to the UPF0232 family.

The chain is UPF0232 protein MSMEG_0004/MSMEI_0006 from Mycolicibacterium smegmatis (strain ATCC 700084 / mc(2)155) (Mycobacterium smegmatis).